The primary structure comprises 490 residues: UDP-N-acetylmuramate--L-alanine ligase (490 aa).

Position 126–132 (126–132) interacts with ATP; sequence GTHGKTT.

Belongs to the MurCDEF family.

It is found in the cytoplasm. The catalysed reaction is UDP-N-acetyl-alpha-D-muramate + L-alanine + ATP = UDP-N-acetyl-alpha-D-muramoyl-L-alanine + ADP + phosphate + H(+). Its pathway is cell wall biogenesis; peptidoglycan biosynthesis. Its function is as follows. Cell wall formation. This Sodalis glossinidius (strain morsitans) protein is UDP-N-acetylmuramate--L-alanine ligase.